The following is an 805-amino-acid chain: Arginine/serine-rich protein PNISR (805 aa).

Polar residues predominate over residues 75–88 (NNHGNFQGDSNFNR). 2 disordered regions span residues 75-331 (NNHG…EEKE) and 382-805 (LTGL…SRSR). Pro residues-rich tracts occupy residues 100–115 (PPHPPPEQPWMPPAPG) and 183–194 (YWQPGPPGPPAP). Residues 197–210 (NRRERPPSFRDRQR) are compositionally biased toward basic and acidic residues. Phosphoserine is present on residues Ser204 and Ser211. A Glycyl lysine isopeptide (Lys-Gly) (interchain with G-Cter in SUMO2) cross-link involves residue Lys218. Residues 237–276 (REGLEKMEREKQKKLEKERMEQQRSQLSKKEKKATEDAEG) adopt a coiled-coil conformation. Over residues 238–258 (EGLEKMEREKQKKLEKERMEQ) the composition is skewed to basic and acidic residues. Ser290, Ser304, Ser313, and Ser321 each carry phosphoserine. The segment covering 290–299 (SDEEDEDAEN) has biased composition (acidic residues). Gly residues predominate over residues 384 to 393 (GLGGLGGYGS). The span at 421-463 (QKQEAFWRKEKEQQLLQDKQIEEEKQQTERVTKEMNEFIHREQ) shows a compositional bias: basic and acidic residues. The stretch at 427–461 (WRKEKEQQLLQDKQIEEEKQQTERVTKEMNEFIHR) forms a coiled coil. Ser465 and Ser467 each carry phosphoserine. Composition is skewed to basic and acidic residues over residues 473-486 (EADRDAVNDKKRTP) and 494-508 (EPKREHKGKEKERGS). Residue Thr485 is modified to Phosphothreonine. A Glycyl lysine isopeptide (Lys-Gly) (interchain with G-Cter in SUMO2) cross-link involves residue Lys496. The span at 509 to 550 (RSGSSSSGSSSSGSRTSSSSSSVSSSSYSSSSGSSCTSSRSS) shows a compositional bias: low complexity. Composition is skewed to basic residues over residues 551–560 (SPKRRKRPSR), 567–579 (KARRSRSRSYSRR), 587–598 (TRGKLRDRRRSN), and 607–639 (RRNRSPSRDRRRSRSRSRDRRTNRSSRSRSRDR). Over residues 659–721 (EAKEQDRKKE…KRKRESERTF (63 aa)) the composition is skewed to basic and acidic residues. Residue Lys703 forms a Glycyl lysine isopeptide (Lys-Gly) (interchain with G-Cter in SUMO2) linkage. At Ser726 the chain carries Phosphoserine. Positions 732-753 (IRHDSRQDSKKNATKDSKRHSG) are enriched in basic and acidic residues. Positions 754-767 (SDSSGRSSSESPGS) are enriched in low complexity. Basic residues-rich tracts occupy residues 771–781 (KKAKKPKHSRS) and 789–805 (RSGKKASRKHKSKSRSR).

Belongs to the splicing factor SR family. As to quaternary structure, interacts with PNN.

The protein resides in the nucleus speckle. The chain is Arginine/serine-rich protein PNISR (Pnisr) from Mus musculus (Mouse).